Consider the following 166-residue polypeptide: Crossover junction endodeoxyribonuclease RuvC (166 aa).

Residues aspartate 7, glutamate 68, and aspartate 141 contribute to the active site. The Mg(2+) site is built by aspartate 7, glutamate 68, and aspartate 141.

This sequence belongs to the RuvC family. As to quaternary structure, homodimer which binds Holliday junction (HJ) DNA. The HJ becomes 2-fold symmetrical on binding to RuvC with unstacked arms; it has a different conformation from HJ DNA in complex with RuvA. In the full resolvosome a probable DNA-RuvA(4)-RuvB(12)-RuvC(2) complex forms which resolves the HJ. Requires Mg(2+) as cofactor.

It is found in the cytoplasm. The catalysed reaction is Endonucleolytic cleavage at a junction such as a reciprocal single-stranded crossover between two homologous DNA duplexes (Holliday junction).. Functionally, the RuvA-RuvB-RuvC complex processes Holliday junction (HJ) DNA during genetic recombination and DNA repair. Endonuclease that resolves HJ intermediates. Cleaves cruciform DNA by making single-stranded nicks across the HJ at symmetrical positions within the homologous arms, yielding a 5'-phosphate and a 3'-hydroxyl group; requires a central core of homology in the junction. The consensus cleavage sequence is 5'-(A/T)TT(C/G)-3'. Cleavage occurs on the 3'-side of the TT dinucleotide at the point of strand exchange. HJ branch migration catalyzed by RuvA-RuvB allows RuvC to scan DNA until it finds its consensus sequence, where it cleaves and resolves the cruciform DNA. The sequence is that of Crossover junction endodeoxyribonuclease RuvC from Caldicellulosiruptor saccharolyticus (strain ATCC 43494 / DSM 8903 / Tp8T 6331).